A 239-amino-acid polypeptide reads, in one-letter code: 1-(5-phosphoribosyl)-5-[(5-phosphoribosylamino)methylideneamino] imidazole-4-carboxamide isomerase (239 aa).

Asp8 serves as the catalytic Proton acceptor. Asp129 acts as the Proton donor in catalysis.

This sequence belongs to the HisA/HisF family.

The protein localises to the cytoplasm. It carries out the reaction 1-(5-phospho-beta-D-ribosyl)-5-[(5-phospho-beta-D-ribosylamino)methylideneamino]imidazole-4-carboxamide = 5-[(5-phospho-1-deoxy-D-ribulos-1-ylimino)methylamino]-1-(5-phospho-beta-D-ribosyl)imidazole-4-carboxamide. Its pathway is amino-acid biosynthesis; L-histidine biosynthesis; L-histidine from 5-phospho-alpha-D-ribose 1-diphosphate: step 4/9. This is 1-(5-phosphoribosyl)-5-[(5-phosphoribosylamino)methylideneamino] imidazole-4-carboxamide isomerase from Cereibacter sphaeroides (strain ATCC 17029 / ATH 2.4.9) (Rhodobacter sphaeroides).